The sequence spans 312 residues: Phosphatidate cytidylyltransferase (312 aa).

Residues 1–31 (MASTDPGTGTPLDESVPGIKRAMRQSTKNTP) are disordered. A run of 8 helical transmembrane segments spans residues 37–57 (LPAA…TLVF), 58–78 (APRI…HEVV), 85–105 (GYVI…WLTW), 110–130 (VGAL…RLVM), 157–177 (ATVF…LLVY), 186–206 (FCLM…GVLF), 223–243 (GFAG…TFLA), and 247–267 (PWVG…GDLV).

Belongs to the CDS family.

It is found in the cell membrane. The enzyme catalyses a 1,2-diacyl-sn-glycero-3-phosphate + CTP + H(+) = a CDP-1,2-diacyl-sn-glycerol + diphosphate. It participates in phospholipid metabolism; CDP-diacylglycerol biosynthesis; CDP-diacylglycerol from sn-glycerol 3-phosphate: step 3/3. This Mycobacterium leprae (strain TN) protein is Phosphatidate cytidylyltransferase (cdsA).